Here is a 217-residue protein sequence, read N- to C-terminus: Probable transaldolase (217 aa).

The active-site Schiff-base intermediate with substrate is K83.

Belongs to the transaldolase family. Type 3B subfamily.

The protein localises to the cytoplasm. The enzyme catalyses D-sedoheptulose 7-phosphate + D-glyceraldehyde 3-phosphate = D-erythrose 4-phosphate + beta-D-fructose 6-phosphate. It participates in carbohydrate degradation; pentose phosphate pathway; D-glyceraldehyde 3-phosphate and beta-D-fructose 6-phosphate from D-ribose 5-phosphate and D-xylulose 5-phosphate (non-oxidative stage): step 2/3. Functionally, transaldolase is important for the balance of metabolites in the pentose-phosphate pathway. This is Probable transaldolase from Rhizorhabdus wittichii (strain DSM 6014 / CCUG 31198 / JCM 15750 / NBRC 105917 / EY 4224 / RW1) (Sphingomonas wittichii).